The chain runs to 297 residues: Putative S-adenosyl-L-methionine-dependent methyltransferase Mmcs_1044 (297 aa).

S-adenosyl-L-methionine is bound by residues Asp124 and 153-154 (DL).

The protein belongs to the UPF0677 family.

In terms of biological role, exhibits S-adenosyl-L-methionine-dependent methyltransferase activity. This is Putative S-adenosyl-L-methionine-dependent methyltransferase Mmcs_1044 from Mycobacterium sp. (strain MCS).